Here is a 159-residue protein sequence, read N- to C-terminus: Ribosomal RNA large subunit methyltransferase H (159 aa).

S-adenosyl-L-methionine-binding positions include Leu-76, Gly-108, and Phe-127 to Phe-132.

Belongs to the RNA methyltransferase RlmH family. Homodimer.

The protein resides in the cytoplasm. It carries out the reaction pseudouridine(1915) in 23S rRNA + S-adenosyl-L-methionine = N(3)-methylpseudouridine(1915) in 23S rRNA + S-adenosyl-L-homocysteine + H(+). Functionally, specifically methylates the pseudouridine at position 1915 (m3Psi1915) in 23S rRNA. The chain is Ribosomal RNA large subunit methyltransferase H from Clostridium tetani (strain Massachusetts / E88).